An 823-amino-acid polypeptide reads, in one-letter code: Lon protease (823 aa).

The region spanning 51-246 (IPILPLRNMV…RLLFILNREY (196 aa)) is the Lon N-terminal domain. ATP is bound at residue 397 to 404 (GPPGVGKT). The Lon proteolytic domain maps to 633–815 (NDYAGVVTGL…QQVVDLALLR (183 aa)). Residues Ser-721 and Lys-764 contribute to the active site.

This sequence belongs to the peptidase S16 family. As to quaternary structure, homohexamer. Organized in a ring with a central cavity.

The protein localises to the cytoplasm. It catalyses the reaction Hydrolysis of proteins in presence of ATP.. Its function is as follows. ATP-dependent serine protease that mediates the selective degradation of mutant and abnormal proteins as well as certain short-lived regulatory proteins. Required for cellular homeostasis and for survival from DNA damage and developmental changes induced by stress. Degrades polypeptides processively to yield small peptide fragments that are 5 to 10 amino acids long. Binds to DNA in a double-stranded, site-specific manner. The sequence is that of Lon protease from Parabacteroides distasonis (strain ATCC 8503 / DSM 20701 / CIP 104284 / JCM 5825 / NCTC 11152).